The primary structure comprises 275 residues: NH(3)-dependent NAD(+) synthetase (275 aa).

46–53 serves as a coordination point for ATP; the sequence is GISGGQDS. A Mg(2+)-binding site is contributed by D52. A deamido-NAD(+)-binding site is contributed by R140. T160 lines the ATP pocket. Position 165 (E165) interacts with Mg(2+). Deamido-NAD(+) is bound by residues K173 and D180. K189 and T211 together coordinate ATP. Position 260–261 (260–261) interacts with deamido-NAD(+); it reads HK.

The protein belongs to the NAD synthetase family. As to quaternary structure, homodimer.

It carries out the reaction deamido-NAD(+) + NH4(+) + ATP = AMP + diphosphate + NAD(+) + H(+). The protein operates within cofactor biosynthesis; NAD(+) biosynthesis; NAD(+) from deamido-NAD(+) (ammonia route): step 1/1. Its function is as follows. Catalyzes the ATP-dependent amidation of deamido-NAD to form NAD. Uses ammonia as a nitrogen source. This Salmonella arizonae (strain ATCC BAA-731 / CDC346-86 / RSK2980) protein is NH(3)-dependent NAD(+) synthetase.